The chain runs to 199 residues: Proteasome subunit beta 2 (199 aa).

Positions 1-6 (MEKKTG) are cleaved as a propeptide — removed in mature form; by autocatalysis. The Nucleophile role is filled by Thr-7.

Belongs to the peptidase T1B family. As to quaternary structure, the 20S proteasome core is composed of 14 alpha and 14 beta subunits that assemble into four stacked heptameric rings, resulting in a barrel-shaped structure. The two inner rings, each composed of seven catalytic beta subunits, are sandwiched by two outer rings, each composed of seven alpha subunits. The catalytic chamber with the active sites is on the inside of the barrel. Has a gated structure, the ends of the cylinder being occluded by the N-termini of the alpha-subunits. Is capped at one or both ends by the proteasome regulatory ATPase, PAN.

It is found in the cytoplasm. The enzyme catalyses Cleavage of peptide bonds with very broad specificity.. Its activity is regulated as follows. The formation of the proteasomal ATPase PAN-20S proteasome complex, via the docking of the C-termini of PAN into the intersubunit pockets in the alpha-rings, triggers opening of the gate for substrate entry. Interconversion between the open-gate and close-gate conformations leads to a dynamic regulation of the 20S proteasome proteolysis activity. Functionally, component of the proteasome core, a large protease complex with broad specificity involved in protein degradation. The protein is Proteasome subunit beta 2 of Thermococcus kodakarensis (strain ATCC BAA-918 / JCM 12380 / KOD1) (Pyrococcus kodakaraensis (strain KOD1)).